We begin with the raw amino-acid sequence, 147 residues long: uncharacterized protein (147 aa).

4 consecutive transmembrane segments (helical) span residues 13–33, 45–65, 80–100, and 116–136; these read LSLVFGLLFTVSGIIEIIIGL, LFVGDVFGGLALLAVGIAYFL, YLFTASIIGLGIGVIAFLILI, and WGFFNDLTVYLVLGMLAIIPY.

It localises to the cell membrane. This is an uncharacterized protein from Methanocaldococcus jannaschii (strain ATCC 43067 / DSM 2661 / JAL-1 / JCM 10045 / NBRC 100440) (Methanococcus jannaschii).